The primary structure comprises 499 residues: Putative sperm motility kinase W (499 aa).

Positions 14–262 constitute a Protein kinase domain; it reads YKVLFTLGHG…IEDIERHPWV (249 aa). ATP is bound by residues 20 to 28 and Lys-43; that span reads LGHGSFGTV. Asp-133 acts as the Proton acceptor in catalysis. Residues 274–314 form the UBA domain; sequence DPDYNIIEMLCGMGFDANEILESLQRKKYNESMGAYLILKA.

The protein belongs to the protein kinase superfamily. CAMK Ser/Thr protein kinase family. Smok subfamily.

The enzyme catalyses L-seryl-[protein] + ATP = O-phospho-L-seryl-[protein] + ADP + H(+). It carries out the reaction L-threonyl-[protein] + ATP = O-phospho-L-threonyl-[protein] + ADP + H(+). Its function is as follows. May play a role in sperm motility, especially in the regulation of flagellar function. The protein is Putative sperm motility kinase W of Mus musculus (Mouse).